A 339-amino-acid polypeptide reads, in one-letter code: UDP-N-acetylglucosamine/UDP-N-acetylgalactosamine transporter nstp-4 (339 aa).

Helical transmembrane passes span 44–64 (LSST…FFVI), 94–114 (LKVA…FFAL), 148–168 (YNWM…YPSG), 186–206 (ILGL…GVYF), 224–244 (LAFF…WQAI), 255–275 (GVIW…ALVV), 281–301 (ILKG…SWLV), and 305–325 (LTIT…TFLY).

This sequence belongs to the nucleotide-sugar transporter family. SLC35A subfamily. Widely expressed, including in pharynx and pharyngeal gland cells, seam cells, spermatheca, stomatointestinal muscle, vulva, and body wall muscle.

It is found in the golgi apparatus membrane. Functionally, uridine diphosphate-N-acetylglucosamine (UDP-GlcNAc) transporter in the Golgi apparatus. UDP-N-acetylgalactosamine (UDP-GalNAc) transporter in the Golgi apparatus. Apparently transports UDP-GlcNAc and UDP-GalNAc simultaneously, and independently, by an unknown mechanism. Functions redundantly with nucleotide sugar transporter srf-3. May be involved in gonadal development. In Caenorhabditis elegans, this protein is UDP-N-acetylglucosamine/UDP-N-acetylgalactosamine transporter nstp-4.